We begin with the raw amino-acid sequence, 226 residues long: Glutathione peroxidase 3 (226 aa).

The N-terminal stretch at 1–24 is a signal peptide; the sequence is MARLLQASCLLSLLLAGFLPQSRG. Sec-73 is a catalytic residue. Position 73 (Sec-73) is a non-standard amino acid, selenocysteine.

It belongs to the glutathione peroxidase family. Homotetramer. Secreted in plasma.

It localises to the secreted. It catalyses the reaction 2 glutathione + H2O2 = glutathione disulfide + 2 H2O. The enzyme catalyses tert-butyl hydroperoxide + 2 glutathione = tert-butanol + glutathione disulfide + H2O. Its function is as follows. Protects cells and enzymes from oxidative damage, by catalyzing the reduction of hydrogen peroxide, lipid peroxides and organic hydroperoxide, by glutathione. This chain is Glutathione peroxidase 3, found in Sapajus apella (Brown-capped capuchin).